A 319-amino-acid polypeptide reads, in one-letter code: Annexin A4 (319 aa).

Thr7 bears the Phosphothreonine mark. Residue Ser12 is modified to Phosphoserine. 4 Annexin repeats span residues 14–85 (FNAT…GMMT), 86–157 (PTVL…SLTA), 169–241 (ALVR…AIVK), and 245–316 (NKPA…ILCG). An N6-acetyllysine mark is found at Lys213, Lys293, and Lys300.

The protein belongs to the annexin family.

The protein localises to the zymogen granule membrane. In terms of biological role, calcium/phospholipid-binding protein which promotes membrane fusion and is involved in exocytosis. This Rattus norvegicus (Rat) protein is Annexin A4 (Anxa4).